The primary structure comprises 445 residues: QPSVFNLVKWLANLHKAPLKPDQKLAMLKRHIIPKLHYGLQTPNITGQILSEADRLIRKAVRRVLHLSVHTGSQFLYAAIRDGGLGIPQLRYHIPDVLRRRLENLSRDDSLAKAMLASAGPAAEFRQRVSVLAARGPPQAYWREQVATRPFSRGLEDCAHDAASREWLLRTPAGWTGRDFVRAAQLRTGNLPTMGLPYIPRERRRCRAGCERVESVSHILQACPVTHFERIKRHDEIVRKIAAHCRKRGWTTEVEPRIYHQDGQLFIPDLAVHLAAESILVCDVQVCWEGHRTLAKSWQNKKLVYDHPRFRKAAARRWAGSRIAISPLVLGPVGVWPRSNAETAALLQLPKTIKGSCIQSCLKWGSSIHKIFMASVWKHGPRPAHHHQPRPPEGQATANTGTLQSGRPALSHSRKKRKRQLTPTQRAPSLASPPAGATPRQLIEY.

In terms of domain architecture, Reverse transcriptase spans 1–114; that stretch reads QPSVFNLVKW…LSRDDSLAKA (114 aa). The nucleic acid-binding endonuclease stretch occupies residues 115 to 445; that stretch reads MLASAGPAAE…GATPRQLIEY (331 aa). Residues 380 to 389 are compositionally biased toward basic residues; that stretch reads GPRPAHHHQP. The segment at 380 to 445 is disordered; the sequence is GPRPAHHHQP…GATPRQLIEY (66 aa). Polar residues predominate over residues 396–405; the sequence is ATANTGTLQS.

The enzyme catalyses DNA(n) + a 2'-deoxyribonucleoside 5'-triphosphate = DNA(n+1) + diphosphate. This chain is Retrovirus-related Pol polyprotein from type-1 retrotransposable element R2, found in Popillia japonica (Japanese beetle).